Here is a 346-residue protein sequence, read N- to C-terminus: Phosphoribosylformylglycinamidine cyclo-ligase (346 aa).

The protein belongs to the AIR synthase family.

It is found in the cytoplasm. The enzyme catalyses 2-formamido-N(1)-(5-O-phospho-beta-D-ribosyl)acetamidine + ATP = 5-amino-1-(5-phospho-beta-D-ribosyl)imidazole + ADP + phosphate + H(+). The protein operates within purine metabolism; IMP biosynthesis via de novo pathway; 5-amino-1-(5-phospho-D-ribosyl)imidazole from N(2)-formyl-N(1)-(5-phospho-D-ribosyl)glycinamide: step 2/2. This Vibrio atlanticus (strain LGP32) (Vibrio splendidus (strain Mel32)) protein is Phosphoribosylformylglycinamidine cyclo-ligase.